Consider the following 528-residue polypeptide: Protein HPH2 (528 aa).

Residues 1–13 are compositionally biased toward low complexity; sequence MQNAQIKSSSKGS. 4 disordered regions span residues 1-52, 170-193, 230-257, and 270-334; these read MQNA…STVE, AQQH…PSRS, ILPN…STQT, and ESSP…QSVA. Residues 17-36 are compositionally biased toward basic and acidic residues; it reads GTDRNSKDGVEKRPLEDVKQ. Low complexity-rich tracts occupy residues 283–296 and 308–332; these read PSVA…VANP and SFSQ…FSQS. Residues 505–521 traverse the membrane as a helical segment; it reads ALDIVFLIIIIVICYTF.

As to quaternary structure, interacts with HPH1/FRT1. In terms of processing, phosphorylated by CDC28.

It localises to the endoplasmic reticulum membrane. Functionally, required for growth under high NaCl, alkaline pH and cell wall stress. The polypeptide is Protein HPH2 (FRT2) (Saccharomyces cerevisiae (strain ATCC 204508 / S288c) (Baker's yeast)).